Consider the following 195-residue polypeptide: SPI-2 type 3 secretion system translocon protein SctB (195 aa).

A coiled-coil region spans residues 44–80 (KLMELAKKLRDIMRSYNVEKQRLAWELQVNVLQTQMK). Transmembrane regions (helical) follow at residues 90-110 (MITAGGAMLSGVLTIGLGAVG), 115-135 (LIAGQAVGHTAGGVMGLGAGV), and 170-190 (EIMQQIIGVGSSLVTVLAEIL).

The protein belongs to the SctB/EspB family. As to quaternary structure, the core secretion machinery of the T3SS is composed of approximately 20 different proteins, including cytoplasmic components, a base, an export apparatus and a needle. This subunit is involved in the formation of a pore, called the translocon, in host membrane. May form a complex with SseB and SseC/SctE2. SseB is required for correct localization of SseD/SctB2 on the bacterial cell surface. Binds to the chaperone SseA.

It is found in the secreted. It localises to the cell surface. The protein localises to the host membrane. In terms of biological role, component of the type III secretion system 2 (SPI-2 T3SS), also called injectisome, which is used to inject bacterial effector proteins into eukaryotic host cells. SseC/SctE2 and SseD/SctB2 are inserted into the host membrane where they form a pore and allow the translocation of effector proteins into the cytosol of target cells. Its function is as follows. Required for the translocation of SPI-2 effector proteins. Required for systemic Salmonella infection of the mouse. Essential for SpvB-induced actin depolymerization in the host cell cytoplasm. The protein is SPI-2 type 3 secretion system translocon protein SctB of Salmonella typhimurium (strain LT2 / SGSC1412 / ATCC 700720).